We begin with the raw amino-acid sequence, 385 residues long: Rubredoxin-NAD(+) reductase (385 aa).

Residues 8 to 11 (AGTA), 32 to 33 (SR), Ile79, Glu156, Asp275, and Ile293 contribute to the FAD site.

Belongs to the FAD-dependent oxidoreductase family. In terms of assembly, homodimer. The cofactor is FAD.

Its subcellular location is the cytoplasm. It carries out the reaction 2 reduced [rubredoxin] + NAD(+) + H(+) = 2 oxidized [rubredoxin] + NADH. The protein operates within hydrocarbon metabolism; alkane degradation. Involved in the hydrocarbon hydroxylating system, which transfers electrons from NADH to rubredoxin reductase and then through rubredoxin to alkane 1 monooxygenase. This is Rubredoxin-NAD(+) reductase (alkT) from Ectopseudomonas oleovorans (Pseudomonas oleovorans).